We begin with the raw amino-acid sequence, 194 residues long: MRLILLGPPGAGKGTQAGLLTKKHGIPQLSTGDMLRAAVAQQSEIGKRAKAVMDAGQLVSDEIVNQIVSERIDAPDCANGFILDGYPRTVPQAQALGTMLAGKGLKLDAVIELKVDENALVKRMESRVAETIAKGGQVRSDDNPEAFRKRLVEYREKTSPLSSYYAGTGELRVINGMAPVEEVTAEIERILVPA.

ATP is bound at residue 10–15 (GAGKGT). Residues 30–59 (STGDMLRAAVAQQSEIGKRAKAVMDAGQLV) form an NMP region. AMP-binding positions include Thr31, Arg36, 57–59 (QLV), 85–88 (GYPR), and Gln92. An LID region spans residues 126 to 142 (SRVAETIAKGGQVRSDD). Arg127 serves as a coordination point for ATP. AMP is bound by residues Arg139 and Arg150. ATP is bound at residue Ala178.

It belongs to the adenylate kinase family. Monomer.

It localises to the cytoplasm. It carries out the reaction AMP + ATP = 2 ADP. It functions in the pathway purine metabolism; AMP biosynthesis via salvage pathway; AMP from ADP: step 1/1. In terms of biological role, catalyzes the reversible transfer of the terminal phosphate group between ATP and AMP. Plays an important role in cellular energy homeostasis and in adenine nucleotide metabolism. The chain is Adenylate kinase from Brucella anthropi (strain ATCC 49188 / DSM 6882 / CCUG 24695 / JCM 21032 / LMG 3331 / NBRC 15819 / NCTC 12168 / Alc 37) (Ochrobactrum anthropi).